The following is a 569-amino-acid chain: MLLLFSVILISWVSTVGGEGTLCDFPKIHHGFLYDEEDYNPFSQVPTGEVFYYSCEYNFVSPSKSFWTRITCTEEGWSPTPKCLRMCSFPFVKNGHSESSGLIHLEGDTVQIICNTGYSLQNNEKNISCVERGWSTPPICSFTKGECHVPILEANVDAQPKKESYKVGDVLKFSCRKNLIRVGSDSVQCYQFGWSPNFPTCKGQVRSCGPPPQLSNGEVKEIRKEEYGHNEVVEYDCNPNFIINGPKKIQCVDGEWTTLPTCVEQVKTCGYIPELEYGYVQPSVPPYQHGVSVEVNCRNEYAMIGNNMITCINGIWTELPMCVATHQLKRCKIAGVNIKTLLKLSGKEFNHNSRIRYRCSDIFRYRHSVCINGKWNPEVDCTEKREQFCPPPPQIPNAQNMTTTVNYQDGEKVAVLCKENYLLPEAKEIVCKDGRWQSLPRCVESTAYCGPPPSINNGDTTSFPLSVYPPGSTVTYRCQSFYKLQGSVTVTCRNKQWSEPPRCLDPCVVSEENMNKNNIQLKWRNDGKLYAKTGDAVEFQCKFPHKAMISSPPFRAICQEGKFEYPICE.

The N-terminal stretch at Met-1–Gly-18 is a signal peptide. Intrachain disulfides connect Cys-23-Cys-72, Cys-55-Cys-83, Cys-87-Cys-129, Cys-114-Cys-140, Cys-147-Cys-189, Cys-175-Cys-201, Cys-208-Cys-251, Cys-237-Cys-262, Cys-269-Cys-311, Cys-297-Cys-322, Cys-331-Cys-370, Cys-359-Cys-381, Cys-389-Cys-431, Cys-417-Cys-442, Cys-449-Cys-492, Cys-478-Cys-503, Cys-507-Cys-558, and Cys-541-Cys-568. 9 Sushi domains span residues Cys-23–Cys-83, Arg-85–Phe-142, Gly-145–Gly-203, Arg-206–Glu-264, Lys-267–Ala-324, Lys-329–Glu-383, Gln-387–Glu-444, Ala-447–Asp-505, and Cys-507–Glu-569. Asn-126 carries an N-linked (GlcNAc...) asparagine glycan. Asn-400 is a glycosylation site (N-linked (GlcNAc...) asparagine).

Head-to-tail homodimer and heterodimer with CFHR1 or CFHR2. Binds C3b in vitro. In terms of tissue distribution, expressed by the liver and secreted in plasma.

The protein localises to the secreted. Involved in complement regulation. The dimerized forms have avidity for tissue-bound complement fragments and efficiently compete with the physiological complement inhibitor CFH. The polypeptide is Complement factor H-related protein 5 (CFHR5) (Homo sapiens (Human)).